We begin with the raw amino-acid sequence, 145 residues long: uncharacterized protein (145 aa).

Residues 104 to 124 (IEVIILSHHFVIGFSFLLGLL) traverse the membrane as a helical segment.

The protein resides in the membrane. This is an uncharacterized protein from Saccharomyces cerevisiae (strain ATCC 204508 / S288c) (Baker's yeast).